The primary structure comprises 72 residues: MNPSEQNHLSVEKPSQTSSGPYTSPPPIGYPTRDAMVGDPPAAAVETKSKGDGFWKGCCAAICCCCVLDACF.

Over residues 1–22 the composition is skewed to polar residues; it reads MNPSEQNHLSVEKPSQTSSGPY. Positions 1-46 are disordered; that stretch reads MNPSEQNHLSVEKPSQTSSGPYTSPPPIGYPTRDAMVGDPPAAAVE. Residues 49–65 form a helical membrane-spanning segment; that stretch reads SKGDGFWKGCCAAICCC.

It belongs to the CYSTM1 family. Heterodimers. Interacts with WIH1/CYSTM13. Mostly expressed in roots and flowers and, to a lower extent, in stems, siliques and leaves.

Its subcellular location is the cell membrane. The protein localises to the nucleus. Its function is as follows. Involved in resistance to abiotic stress. The chain is Protein CYSTEINE-RICH TRANSMEMBRANE MODULE 9 from Arabidopsis thaliana (Mouse-ear cress).